The chain runs to 374 residues: tRNA-specific 2-thiouridylase MnmA (374 aa).

ATP is bound by residues 12 to 19 and M38; that span reads GMSGGVDS. The segment at 98 to 100 is interaction with target base in tRNA; it reads NPD. Catalysis depends on C103, which acts as the Nucleophile. C103 and C202 are oxidised to a cystine. G128 contacts ATP. The tract at residues 152 to 154 is interaction with tRNA; the sequence is KDQ. The active-site Cysteine persulfide intermediate is the C202. An interaction with tRNA region spans residues 316-317; sequence RY.

This sequence belongs to the MnmA/TRMU family.

It is found in the cytoplasm. It carries out the reaction S-sulfanyl-L-cysteinyl-[protein] + uridine(34) in tRNA + AH2 + ATP = 2-thiouridine(34) in tRNA + L-cysteinyl-[protein] + A + AMP + diphosphate + H(+). In terms of biological role, catalyzes the 2-thiolation of uridine at the wobble position (U34) of tRNA, leading to the formation of s(2)U34. The sequence is that of tRNA-specific 2-thiouridylase MnmA from Vibrio campbellii (strain ATCC BAA-1116).